The primary structure comprises 398 residues: Beta-1,4-galactosyltransferase 1 (398 aa).

The Cytoplasmic portion of the chain corresponds to 1 to 24 (MRLREPLLSGSAAMPGASLQRACR). The chain crosses the membrane as a helical; Signal-anchor for type II membrane protein span at residues 25–44 (LLVAVCALHLGVTLVYYLAG). Residues 45–398 (RDLSRLPQLV…QITVDIGTPS (354 aa)) are Lumenal-facing. A compositionally biased stretch (polar residues) spans 61–76 (QGGSNSAAAIGQSSGE). A disordered region spans residues 61–117 (QGGSNSAAAIGQSSGELRTGGARPPPPLGASSQPRPGGDSSPVVDSGPGPASNLTSV). N-linked (GlcNAc...) asparagine glycosylation occurs at Asn113. Cys130 and Cys172 are joined by a disulfide. Residues 183–187 (PFRNR), 222–224 (FNR), 249–250 (VD), and Trp310 each bind UDP-alpha-D-galactose. An intrachain disulfide couples Cys243 to Cys262. Asp250 contributes to the Mn(2+) binding site. Residue 312–315 (GEDD) coordinates N-acetyl-D-glucosamine. Mn(2+) is bound at residue His343. 343–346 (HSRD) provides a ligand contact to UDP-alpha-D-galactose. Residue Arg355 coordinates N-acetyl-D-glucosamine.

This sequence belongs to the glycosyltransferase 7 family. Homodimer; and heterodimer with alpha-lactalbumin to form lactose synthase. Interacts (via N-terminal cytoplasmic domain) with UBE2Q1 (via N-terminus); the interaction is direct. The cofactor is Mn(2+). The soluble form derives from the membrane forms by proteolytic processing. In terms of tissue distribution, ubiquitously expressed, but at very low levels in fetal and adult brain.

It is found in the golgi apparatus. It localises to the golgi stack membrane. Its subcellular location is the cell membrane. The protein resides in the cell surface. The protein localises to the cell projection. It is found in the filopodium. It localises to the secreted. The enzyme catalyses D-glucose + UDP-alpha-D-galactose = lactose + UDP + H(+). It carries out the reaction an N-acetyl-beta-D-glucosaminyl derivative + UDP-alpha-D-galactose = a beta-D-galactosyl-(1-&gt;4)-N-acetyl-beta-D-glucosaminyl derivative + UDP + H(+). The catalysed reaction is N-acetyl-D-glucosamine + UDP-alpha-D-galactose = beta-D-galactosyl-(1-&gt;4)-N-acetyl-D-glucosamine + UDP + H(+). It catalyses the reaction a beta-D-GlcNAc-(1-&gt;3)-beta-D-Gal-(1-&gt;4)-beta-D-Glc-(1&lt;-&gt;1)-Cer(d18:1(4E)) + UDP-alpha-D-galactose = a neolactoside nLc4Cer(d18:1(4E)) + UDP + H(+). The enzyme catalyses a beta-D-glucosylceramide + UDP-alpha-D-galactose = a beta-D-galactosyl-(1-&gt;4)-beta-D-glucosyl-(1&lt;-&gt;1)-ceramide + UDP + H(+). It carries out the reaction a neolactoside IV(3)-beta-GlcNAc-nLc4Cer + UDP-alpha-D-galactose = a neolactoside nLc6Cer + UDP + H(+). It functions in the pathway protein modification; protein glycosylation. Its function is as follows. The Golgi complex form catalyzes the production of lactose in the lactating mammary gland and could also be responsible for the synthesis of complex-type N-linked oligosaccharides in many glycoproteins as well as the carbohydrate moieties of glycolipids. Functionally, the cell surface form functions as a recognition molecule during a variety of cell to cell and cell to matrix interactions, as those occurring during development and egg fertilization, by binding to specific oligosaccharide ligands on opposing cells or in the extracellular matrix. The polypeptide is Beta-1,4-galactosyltransferase 1 (Homo sapiens (Human)).